We begin with the raw amino-acid sequence, 351 residues long: Methylthioribose-1-phosphate isomerase (351 aa).

Substrate is bound by residues 55-57 (RGA), Arg-95, and Gln-202. The active-site Proton donor is the Asp-243. 253-254 (NK) contacts substrate.

Belongs to the eIF-2B alpha/beta/delta subunits family. MtnA subfamily.

It catalyses the reaction 5-(methylsulfanyl)-alpha-D-ribose 1-phosphate = 5-(methylsulfanyl)-D-ribulose 1-phosphate. It participates in amino-acid biosynthesis; L-methionine biosynthesis via salvage pathway; L-methionine from S-methyl-5-thio-alpha-D-ribose 1-phosphate: step 1/6. Functionally, catalyzes the interconversion of methylthioribose-1-phosphate (MTR-1-P) into methylthioribulose-1-phosphate (MTRu-1-P). This is Methylthioribose-1-phosphate isomerase from Marinobacter nauticus (strain ATCC 700491 / DSM 11845 / VT8) (Marinobacter aquaeolei).